The chain runs to 274 residues: NH(3)-dependent NAD(+) synthetase (274 aa).

An ATP-binding site is contributed by 46-53; that stretch reads GISGGQDS. Residue Asp-52 coordinates Mg(2+). Arg-140 contributes to the deamido-NAD(+) binding site. Residue Thr-160 participates in ATP binding. A Mg(2+)-binding site is contributed by Glu-165. Deamido-NAD(+) is bound by residues Lys-173 and Asp-180. Lys-189 and Thr-211 together coordinate ATP. 260-261 serves as a coordination point for deamido-NAD(+); sequence HK.

This sequence belongs to the NAD synthetase family. Homodimer.

It carries out the reaction deamido-NAD(+) + NH4(+) + ATP = AMP + diphosphate + NAD(+) + H(+). Its pathway is cofactor biosynthesis; NAD(+) biosynthesis; NAD(+) from deamido-NAD(+) (ammonia route): step 1/1. In terms of biological role, catalyzes the ATP-dependent amidation of deamido-NAD to form NAD. Uses ammonia as a nitrogen source. This chain is NH(3)-dependent NAD(+) synthetase, found in Streptococcus pyogenes serotype M1.